Reading from the N-terminus, the 301-residue chain is WD repeat-containing protein SL1-17 (301 aa).

7 WD repeats span residues 11–54 (AHKE…LKCL), 59–98 (GHRL…LTKT), 101–140 (GDPA…KEGS), 143–182 (LEGK…VQFL), 184–223 (GHAT…LVIP), 227–266 (GHKG…EKHC), and 269–300 (THED…IYQC).

This chain is WD repeat-containing protein SL1-17, found in Schistosoma mansoni (Blood fluke).